The chain runs to 261 residues: tRNA U34 carboxymethyltransferase (261 aa).

Residues Lys25, Trp39, Lys44, Gly63, 114-115 (VE), Tyr135, and Arg250 contribute to the carboxy-S-adenosyl-L-methionine site.

It belongs to the class I-like SAM-binding methyltransferase superfamily. CmoB family. In terms of assembly, homotetramer.

It carries out the reaction carboxy-S-adenosyl-L-methionine + 5-hydroxyuridine(34) in tRNA = 5-carboxymethoxyuridine(34) in tRNA + S-adenosyl-L-homocysteine + H(+). Its function is as follows. Catalyzes carboxymethyl transfer from carboxy-S-adenosyl-L-methionine (Cx-SAM) to 5-hydroxyuridine (ho5U) to form 5-carboxymethoxyuridine (cmo5U) at position 34 in tRNAs. This Helicobacter pylori (strain G27) protein is tRNA U34 carboxymethyltransferase.